A 38-amino-acid polypeptide reads, in one-letter code: Esterase-5 (38 aa).

Positions Ser-1–Gly-38 are disordered.

This sequence belongs to the type-B carboxylesterase/lipase family.

It catalyses the reaction a carboxylic ester + H2O = an alcohol + a carboxylate + H(+). The protein is Esterase-5 (Est-5) of Drosophila mojavensis (Fruit fly).